The primary structure comprises 2097 residues: 1-phosphatidylinositol 3-phosphate 5-kinase (2097 aa).

The disordered stretch occupies residues 1–44; it reads MATDDKSSPTLDSANDLPRSPASPSHLTHFKPLTPDQDEPPFKS. Ala-2 carries the post-translational modification N-acetylalanine. Phosphoserine; by autocatalysis occurs at positions 23 and 48. The interval 56-122 is disordered; that stretch reads NKERGEGGQG…AEPACGGHDP (67 aa). The span at 66–81 shows a compositional bias: low complexity; the sequence is EQQSPSSSWASPQIPS. Position 88 is a phosphoserine (Ser-88). The FYVE-type zinc-finger motif lies at 158–218; sequence DSQCKECYDC…ACTYCRKIAL (61 aa). Residues Cys-164, Cys-167, Cys-180, Cys-183, Cys-188, Cys-191, Cys-210, and Cys-213 each contribute to the Zn(2+) site. 3 positions are modified to phosphoserine: Ser-299, Ser-307, and Ser-312. The residue at position 318 (Ser-318) is a Phosphoserine; by PKB/AKT1 or PKB/AKT2. Ser-329 carries the phosphoserine modification. Positions 365–440 constitute a DEP domain; that stretch reads HTSGMEFQDH…DEYALYRPLQ (76 aa). Positions 442–459 are enriched in polar residues; the sequence is TEFSETPSPDSDSVNSVE. Residues 442 to 469 form a disordered region; it reads TEFSETPSPDSDSVNSVEGHSEPSWFKD. Residues 460-469 show a composition bias toward basic and acidic residues; the sequence is GHSEPSWFKD. Ser-475 is modified (phosphoserine). Residues 484–505 form a disordered region; it reads GDDNLANSASPSKRTSVSSFQS. A compositionally biased stretch (polar residues) spans 488-505; that stretch reads LANSASPSKRTSVSSFQS. The interval 616–868 is chaperonin-like domain; sequence MMALLQQLLQ…MICVAYHSQL (253 aa). 4 disordered regions span residues 895–928, 989–1022, 1171–1194, and 1511–1555; these read GRGEEGASQEQVSGSSLPQDPECPREALSSEDST, AVGNEQPETSQQTDEQQDPKSQMKAFRDPLQDDT, HSKDASCTSGGKSGNKTESDEERG, and FQQE…HNGE. Over residues 902–912 the composition is skewed to polar residues; the sequence is SQEQVSGSSLP. Residues 1175-1184 are compositionally biased toward polar residues; sequence ASCTSGGKSG. Over residues 1185-1194 the composition is skewed to basic and acidic residues; that stretch reads NKTESDEERG. A phosphoserine mark is found at Ser-1543 and Ser-1548. Ser-1668 carries the post-translational modification Phosphoserine; by autocatalysis. A disordered region spans residues 1697 to 1742; that stretch reads EGLPANSALDNRPKSSSPIRLPEISGGQTNRTVEAEPQPTKKASGM. Residue Ser-1753 is modified to Phosphoserine. Residues 1757 to 2083 form the PIPK domain; it reads SSQKRETLRG…RFCEAMDKYF (327 aa). The segment at 1781 to 1800 is disordered; it reads GLESQGLEPQDEVDGGDTQK. The catalytic stretch occupies residues 1841 to 2097; sequence EEEFIRSLSH…DHWTGLDLNC (257 aa). 2 positions are modified to phosphoserine; by autocatalysis: Ser-1968 and Ser-2052.

As to quaternary structure, component of the PI(3,5)P2 regulatory complex/PAS complex, at least composed of PIKFYVE, FIG4 and VAC14. VAC14 nucleates the assembly of the complex and serves as a scaffold by pentamerizing into a star-shaped structure, which can bind a single copy each of PIKFYVE and FIG4 and coordinates their activities. Interacts (via chaperonin-like domain) with RABEPK; the interaction recruits RABEPK to the endosomal membrane. Interacts with SPAG9. Interacts with EGFR. Mn(2+) serves as cofactor. Phosphorylated in response to insulin at Ser-318 in a protein kinase B (PKB)-dependent manner. Autophosphorylates which down-regulates lipid product formation. Post-translationally, autophosphorylates which inhibits its own phosphatidylinositol 3-phosphate 5-kinase activity, stimulates FIG4 lipid phosphatase activity and down-regulates lipid product formation. Dephosphorylated by FIG4 in the PI(3,5)P2 regulatory complex, at Ser-48, Ser-1668 and Ser-2052. Phosphorylated in response to insulin at Ser-318 in a protein kinase B (PKB)-dependent manner. Ubiquitous.

The protein resides in the endosome membrane. Its subcellular location is the early endosome membrane. The protein localises to the cytoplasmic vesicle. It localises to the phagosome membrane. It is found in the late endosome membrane. It carries out the reaction a 1,2-diacyl-sn-glycero-3-phospho-(1D-myo-inositol-3-phosphate) + ATP = a 1,2-diacyl-sn-glycero-3-phospho-(1D-myo-inositol-3,5-bisphosphate) + ADP + H(+). The enzyme catalyses a 1,2-diacyl-sn-glycero-3-phospho-(1D-myo-inositol) + ATP = a 1,2-diacyl-sn-glycero-3-phospho-(1D-myo-inositol-5-phosphate) + ADP + H(+). The catalysed reaction is L-seryl-[protein] + ATP = O-phospho-L-seryl-[protein] + ADP + H(+). With respect to regulation, inhibited by apilimod and YM201636. Functionally, dual specificity kinase implicated in myriad essential cellular processes such as maintenance of endomembrane homeostasis, and endocytic-vacuolar pathway, lysosomal trafficking, nuclear transport, stress- or hormone-induced signaling and cell cycle progression. The PI(3,5)P2 regulatory complex regulates both the synthesis and turnover of phosphatidylinositol 3,5-bisphosphate (PtdIns(3,5)P2). Sole enzyme to catalyze the phosphorylation of phosphatidylinositol 3-phosphate on the fifth hydroxyl of the myo-inositol ring, to form (PtdIns(3,5)P2). Also catalyzes the phosphorylation of phosphatidylinositol on the fifth hydroxyl of the myo-inositol ring, to form phosphatidylinositol 5-phosphate (PtdIns(5)P). Has serine-protein kinase activity and is able to autophosphorylate and transphosphorylate. Autophosphorylation inhibits its own phosphatidylinositol 3-phosphate 5-kinase activity, stimulates FIG4 lipid phosphatase activity and down-regulates lipid product formation. Involved in key endosome operations such as fission and fusion in the course of endosomal cargo transport. Required for the maturation of early into late endosomes, phagosomes and lysosomes. Regulates vacuole maturation and nutrient recovery following engulfment of macromolecules, initiates the redistribution of accumulated lysosomal contents back into the endosome network. Critical regulator of the morphology, degradative activity, and protein turnover of the endolysosomal system in macrophages and platelets. In neutrophils, critical to perform chemotaxis, generate ROS, and undertake phagosome fusion with lysosomes. Plays a key role in the processing and presentation of antigens by major histocompatibility complex class II (MHC class II) mediated by CTSS. Regulates melanosome biogenesis by controlling the delivery of proteins from the endosomal compartment to the melanosome. Essential for systemic glucose homeostasis, mediates insulin-induced signals for endosome/actin remodeling in the course of GLUT4 translocation/glucose uptake activation. Supports microtubule-based endosome-to-trans-Golgi network cargo transport, trhough association with SPAG9 and RABEPK. Mediates EGFR trafficking to the nucleus. This is 1-phosphatidylinositol 3-phosphate 5-kinase from Mus musculus (Mouse).